A 726-amino-acid polypeptide reads, in one-letter code: Catalase-peroxidase (726 aa).

The interval 1–25 (MDAKTDDSAGKCPFTGGGRRGHRNR) is disordered. A cross-link (tryptophyl-tyrosyl-methioninium (Trp-Tyr) (with M-244)) is located at residues 96–218 (WHSAGTYRIT…LAAVQMGLIY (123 aa)). Catalysis depends on His97, which acts as the Proton acceptor. Residues 218-244 (YVNPEGPNGNPDPVAAAKDIRETFYRM) constitute a cross-link (tryptophyl-tyrosyl-methioninium (Tyr-Met) (with W-96)). Residue His259 coordinates heme b.

It belongs to the peroxidase family. Peroxidase/catalase subfamily. In terms of assembly, homodimer or homotetramer. Heme b serves as cofactor. In terms of processing, formation of the three residue Trp-Tyr-Met cross-link is important for the catalase, but not the peroxidase activity of the enzyme.

It catalyses the reaction H2O2 + AH2 = A + 2 H2O. The enzyme catalyses 2 H2O2 = O2 + 2 H2O. Its function is as follows. Bifunctional enzyme with both catalase and broad-spectrum peroxidase activity. This Chelativorans sp. (strain BNC1) protein is Catalase-peroxidase.